The following is a 574-amino-acid chain: Serine/threonine-protein kinase fray1 (574 aa).

A compositionally biased stretch (basic and acidic residues) spans 24–41 (NHHDLPDSDSDSSSREEE). The tract at residues 24–64 (NHHDLPDSDSDSSSREEELMNSSGGGNGKEPIGEKKKLPSH) is disordered. Positions 97–357 (YNLIEPIGEG…ASKLLEHKVF (261 aa)) constitute a Protein kinase domain. ATP-binding positions include 103-111 (IGEGTEGRV) and lysine 126. Aspartate 221 functions as the Proton acceptor in the catalytic mechanism. Position 256 is a phosphothreonine; by autocatalysis (threonine 256). Disordered stretches follow at residues 381–447 (YRES…LVNM), 462–514 (LSSG…PEKE), and 532–554 (FGSPKEGDHNHQHHKSEGDHEHH). Composition is skewed to low complexity over residues 386–403 (SPASSNTPSPDSSRPSSP), 418–441 (KNIKPSSLNKSSSSLELKNKNLSN), and 462–475 (LSSGSGPLSQSSDL). The span at 478–491 (GHLHKIGTPKKKHS) shows a compositional bias: basic residues. Positions 492-506 (PSGSIGDSHGSISPP) are enriched in low complexity. Over residues 536-553 (KEGDHNHQHHKSEGDHEH) the composition is skewed to basic and acidic residues.

This sequence belongs to the protein kinase superfamily. STE Ser/Thr protein kinase family. STE20 subfamily. Mn(2+) is required as a cofactor. In terms of processing, undergoes autophosphorylation in the catalytic domain.

The enzyme catalyses L-seryl-[protein] + ATP = O-phospho-L-seryl-[protein] + ADP + H(+). The catalysed reaction is L-threonyl-[protein] + ATP = O-phospho-L-threonyl-[protein] + ADP + H(+). The chain is Serine/threonine-protein kinase fray1 from Dictyostelium discoideum (Social amoeba).